A 358-amino-acid chain; its full sequence is Uroporphyrinogen decarboxylase (358 aa).

Substrate contacts are provided by residues 36-40 (RQAGR), Asp85, Tyr160, Ser215, and His338.

This sequence belongs to the uroporphyrinogen decarboxylase family. As to quaternary structure, homodimer.

It localises to the cytoplasm. The enzyme catalyses uroporphyrinogen III + 4 H(+) = coproporphyrinogen III + 4 CO2. The protein operates within porphyrin-containing compound metabolism; protoporphyrin-IX biosynthesis; coproporphyrinogen-III from 5-aminolevulinate: step 4/4. Functionally, catalyzes the decarboxylation of four acetate groups of uroporphyrinogen-III to yield coproporphyrinogen-III. This chain is Uroporphyrinogen decarboxylase, found in Corynebacterium glutamicum (strain R).